The chain runs to 70 residues: uncharacterized protein (70 aa).

The protein localises to the plastid. The protein resides in the chloroplast. This is an uncharacterized protein from Mesostigma viride (Green alga).